A 141-amino-acid chain; its full sequence is Transcriptional regulator MraZ (141 aa).

SpoVT-AbrB domains are found at residues threonine 5–aspartate 47 and alanine 76–leucine 119.

It belongs to the MraZ family. Homooctamer. Forms a ring.

The protein resides in the cytoplasm. Its subcellular location is the nucleoid. The polypeptide is Transcriptional regulator MraZ (Mycoplasma pneumoniae (strain ATCC 29342 / M129 / Subtype 1) (Mycoplasmoides pneumoniae)).